An 800-amino-acid polypeptide reads, in one-letter code: Protein gfi-3 (800 aa).

Residues glutamate 346–glutamate 366 are a coiled coil. TPR repeat units follow at residues alanine 526–glutamate 559 and isoleucine 637–threonine 670.

The APC/C complex is probably composed of at least 12 subunits: apc-2, apc-10, apc-11, cdc-26, emb-1, emb-27, emb-30, mat-1, mat-2, mat-3, such-1 and gfi-3. Expressed in gut cells and mature sperm stored in the spermatheca.

It participates in protein modification; protein ubiquitination. Its function is as follows. Probable component of the anaphase promoting complex/cyclosome (APC/C), a cell cycle-regulated E3 ubiquitin ligase that controls progression through mitosis and the G1 phase of the cell cycle. The APC/C complex acts by mediating ubiquitination and subsequent degradation of target proteins. Required for the metaphase to anaphase transition in meiosis. This Caenorhabditis elegans protein is Protein gfi-3.